The primary structure comprises 323 residues: Vertebrate ancient opsin (323 aa).

At 1 to 38 (MDTLRIAVNGVSYNEASEIYKPHADPFTGPITNLAPWN) the chain is on the extracellular side. Residues 39 to 63 (FAVLATLMFVITSLSLFENFTVMLA) traverse the membrane as a helical segment. The Cytoplasmic portion of the chain corresponds to 64–75 (TYKFKQLRQPLN). The helical transmembrane segment at 76–100 (YIIVNLSLADFLVSLTGGTISFLTN) threads the bilayer. Residues 101-115 (ARGYFFLGNWACVLE) are Extracellular-facing. A disulfide bridge connects residues Cys112 and Cys189. A helical transmembrane segment spans residues 116–135 (GFAVTYFGIVAMWSLAVLSF). Topologically, residues 136 to 154 (ERYFVICRPLGNVRLRGKH) are cytoplasmic. The chain crosses the membrane as a helical span at residues 155-178 (AALGLLFVWTFSFIWTIPPVFGWC). The Extracellular portion of the chain corresponds to 179 to 202 (SYTVSKIGTTCEPNWYSNNIWNHT). Asn200 carries an N-linked (GlcNAc...) asparagine glycan. A helical membrane pass occupies residues 203–230 (YIITFFVTCFIMPLGMIIYCYGKLLQKL). Residues 231-250 (RKVSHDRLGNAKKPERQVSR) lie on the Cytoplasmic side of the membrane. Residues 251 to 274 (MVVVMIVAYLVGWTPYAAFSIIVT) traverse the membrane as a helical segment. At 275–282 (ACPTIYLD) the chain is on the extracellular side. The chain crosses the membrane as a helical span at residues 283 to 307 (PRLAAAPAFFSKTAAVYNPVIYVFM). The residue at position 294 (Lys294) is an N6-(retinylidene)lysine. Residues 308–323 (NKQVSTQLNWGFWSRA) are Cytoplasmic-facing.

The protein belongs to the G-protein coupled receptor 1 family. Opsin subfamily. In terms of processing, phosphorylated on some or all of the serine and threonine residues present in the C-terminal region.

It is found in the membrane. In Salmo salar (Atlantic salmon), this protein is Vertebrate ancient opsin.